The sequence spans 115 residues: UPF0102 protein SYO3AOP1_0546 (115 aa).

It belongs to the UPF0102 family.

The chain is UPF0102 protein SYO3AOP1_0546 from Sulfurihydrogenibium sp. (strain YO3AOP1).